The following is a 210-amino-acid chain: Heart- and neural crest derivatives-expressed protein 2 (210 aa).

The tract at residues 81-101 (SGAGGLMQRPVKRRGTANRKE) is disordered. Positions 90–101 (PVKRRGTANRKE) are enriched in basic residues. The bHLH domain occupies 92–144 (KRRGTANRKERRRTISINSAFAELRECIPNVPADTKLSKIKTLRLATSYIAYL).

Efficient DNA binding requires dimerization with another bHLH protein. In terms of tissue distribution, heart, liver and spleen.

The protein resides in the nucleus. In terms of biological role, essential for cardiac morphogenesis and for the development of branchial arches. Binds DNA on E-box consensus sequence 5'-CANNTG-3'. The protein is Heart- and neural crest derivatives-expressed protein 2 (hand2) of Xenopus laevis (African clawed frog).